Here is a 518-residue protein sequence, read N- to C-terminus: Hyccin (518 aa).

Disordered stretches follow at residues glycine 385–leucine 410 and valine 466–alanine 492. Residues serine 393–alanine 403 are compositionally biased toward basic and acidic residues. A compositionally biased stretch (polar residues) spans valine 466–valine 484.

Belongs to the Hyccin family. In terms of assembly, component of a phosphatidylinositol 4-kinase (PI4K) complex.

It is found in the cytoplasm. It localises to the cytosol. The protein resides in the cell membrane. Functionally, component of a complex required to localize phosphatidylinositol 4-kinase (PI4K) to the plasma membrane. The complex acts as a regulator of phosphatidylinositol 4-phosphate (PtdIns(4)P) synthesis. In Danio rerio (Zebrafish), this protein is Hyccin (hycc1).